A 447-amino-acid chain; its full sequence is Adenylosuccinate synthetase (447 aa).

Residues Gly-35–Lys-41 and Gly-63–Thr-65 each bind GTP. Asp-36 acts as the Proton acceptor in catalysis. Asp-36 and Gly-63 together coordinate Mg(2+). IMP is bound by residues Asp-36–Lys-39, Asn-61–His-64, Thr-153, Arg-167, Asn-245, Thr-260, and Arg-324. The active-site Proton donor is His-64. Val-320 to Arg-326 is a binding site for substrate. GTP is bound by residues Arg-326, Lys-352–Asp-354, and Gly-435–Gly-437.

Belongs to the adenylosuccinate synthetase family. In terms of assembly, homodimer. Requires Mg(2+) as cofactor.

The protein localises to the cytoplasm. It carries out the reaction IMP + L-aspartate + GTP = N(6)-(1,2-dicarboxyethyl)-AMP + GDP + phosphate + 2 H(+). It functions in the pathway purine metabolism; AMP biosynthesis via de novo pathway; AMP from IMP: step 1/2. Its function is as follows. Plays an important role in the de novo pathway and in the salvage pathway of purine nucleotide biosynthesis. Catalyzes the first committed step in the biosynthesis of AMP from IMP. Plays a role in the regulation of adult life span. The sequence is that of Adenylosuccinate synthetase from Drosophila melanogaster (Fruit fly).